Consider the following 119-residue polypeptide: uncharacterized protein (119 aa).

A helical transmembrane segment spans residues 80–104 (VFPLVYLFCVVFQFLSLGCYLSIFF).

The protein resides in the membrane. This is an uncharacterized protein from Saccharomyces cerevisiae (strain ATCC 204508 / S288c) (Baker's yeast).